The following is a 753-amino-acid chain: Transcription factor SOX-30 (753 aa).

Disordered stretches follow at residues 1–45 and 140–161; these read MERA…TLSA and QELG…TGPR. Positions 7-22 are enriched in pro residues; it reads EPQPQQRPLRPAPPLL. The segment at residues 337 to 405 is a DNA-binding region (HMG box); that stretch reads VKRPMNAFMV…KHREEFPGWV (69 aa). 2 disordered regions span residues 514 to 540 and 726 to 753; these read AGPS…PVSL and PTST…LRDL. Composition is skewed to polar residues over residues 531–540 and 726–739; these read TVKQPTPVSL and PTST…VNVT.

As to quaternary structure, interacts with CTNNB1, competitively inhibiting CTNNB1-TCF7L2/TCF4 interaction.

It localises to the nucleus. The protein localises to the cytoplasm. Functionally, acts both as a transcriptional activator and a repressor. Binds to the DNA sequence 5'-ACAAT-3' and shows a preference for guanine residues surrounding this core motif. Binds to its own promoter and activates its own transcription. Required to activate the expression of postmeiotic genes involved in spermiogenesis. Binds to the promoter region of CTNNB1 and represses its transcription which leads to inhibition of Wnt signaling. Also inhibits Wnt signaling by binding to the CTNNB1 protein, preventing interaction of CTNNB1 with TCF7L2/TCF4. The polypeptide is Transcription factor SOX-30 (SOX30) (Macaca fascicularis (Crab-eating macaque)).